The following is a 454-amino-acid chain: Probable diacyglycerol O-acyltransferase tgs2 (454 aa).

Residue His139 is the Proton acceptor of the active site.

The protein belongs to the long-chain O-acyltransferase family.

It catalyses the reaction an acyl-CoA + a 1,2-diacyl-sn-glycerol = a triacyl-sn-glycerol + CoA. The enzyme catalyses a long chain fatty alcohol + a fatty acyl-CoA = a wax ester + CoA. It participates in glycerolipid metabolism; triacylglycerol biosynthesis. Its function is as follows. Catalyzes the terminal and only committed step in triacylglycerol synthesis by using diacylglycerol and fatty acyl CoA as substrates. Required for storage lipid synthesis. The chain is Probable diacyglycerol O-acyltransferase tgs2 (tgs2) from Mycobacterium tuberculosis (strain CDC 1551 / Oshkosh).